The following is a 221-amino-acid chain: UPF0319 protein CGSHiGG_02140 (221 aa).

The N-terminal stretch at 1 to 21 (MKLRAVVLGLATLCTSTATFA) is a signal peptide.

It belongs to the UPF0319 family.

This chain is UPF0319 protein CGSHiGG_02140, found in Haemophilus influenzae (strain PittGG).